The sequence spans 701 residues: C6 finger domain transcription factor nscR (701 aa).

Residues 17-43 (CELCRERKVKCDKLDPCTNCSSAGVIC) constitute a DNA-binding region (zn(2)-C6 fungal-type).

The protein localises to the nucleus. Functionally, transcription factor that specifically regulates the neosartoricin B biosynthesis gene cluster. This chain is C6 finger domain transcription factor nscR, found in Arthroderma benhamiae (strain ATCC MYA-4681 / CBS 112371) (Trichophyton mentagrophytes).